The primary structure comprises 388 residues: Chorismate synthase (388 aa).

Residues Arg39 and Arg45 each coordinate NADP(+). Residues 130–132, 251–252, Ala296, 311–315, and Arg337 contribute to the FMN site; these read RSS, NA, and KPIPT.

This sequence belongs to the chorismate synthase family. Homotetramer. The cofactor is FMNH2.

It carries out the reaction 5-O-(1-carboxyvinyl)-3-phosphoshikimate = chorismate + phosphate. It functions in the pathway metabolic intermediate biosynthesis; chorismate biosynthesis; chorismate from D-erythrose 4-phosphate and phosphoenolpyruvate: step 7/7. In terms of biological role, catalyzes the anti-1,4-elimination of the C-3 phosphate and the C-6 proR hydrogen from 5-enolpyruvylshikimate-3-phosphate (EPSP) to yield chorismate, which is the branch point compound that serves as the starting substrate for the three terminal pathways of aromatic amino acid biosynthesis. This reaction introduces a second double bond into the aromatic ring system. This Streptococcus equi subsp. zooepidemicus (strain MGCS10565) protein is Chorismate synthase.